Here is a 196-residue protein sequence, read N- to C-terminus: Large ribosomal subunit protein bL9 (196 aa).

It belongs to the bacterial ribosomal protein bL9 family.

Its function is as follows. Binds to the 23S rRNA. The sequence is that of Large ribosomal subunit protein bL9 from Rhodopseudomonas palustris (strain HaA2).